Consider the following 225-residue polypeptide: MGKVVSVILAGGKGKRMGAEVSKQFIEINGKPIIYYTLKAFEECKDIDEIILVLPKDEIDYFKREIEPRFDFKISKIIEGGKERQDSVYNALNSIGDCDIVLIHDGARAFVSNKIIEDGIKYSREFGAAAPGVMPKDTIKVKNLEGFSVDTPNRASLVAVQTPQCFKYNLIKKGHNKVKNEKIQVTDDTMIVELLGEKVYLFEGDYKNIKVTTPEDLILAEHFVK.

The protein belongs to the IspD/TarI cytidylyltransferase family. IspD subfamily.

The enzyme catalyses 2-C-methyl-D-erythritol 4-phosphate + CTP + H(+) = 4-CDP-2-C-methyl-D-erythritol + diphosphate. The protein operates within isoprenoid biosynthesis; isopentenyl diphosphate biosynthesis via DXP pathway; isopentenyl diphosphate from 1-deoxy-D-xylulose 5-phosphate: step 2/6. Catalyzes the formation of 4-diphosphocytidyl-2-C-methyl-D-erythritol from CTP and 2-C-methyl-D-erythritol 4-phosphate (MEP). In Clostridium perfringens (strain SM101 / Type A), this protein is 2-C-methyl-D-erythritol 4-phosphate cytidylyltransferase.